The chain runs to 431 residues: MSIITDILGREVLDSRGNPTVEVEVYTEDGGFGRAIVPSGASTGEHEAVELRDGDKSRFGGKGVLKAVENVNGPLAKEIVGFDTTDQRGIDAAMIKLDGTENKGKLGANAILGVSLAAARAAADELGLPLYEYLGGPNAHVLPTPMMNVINGGAHSDNKVDFQEFMIMPVGAKSVREAIRMGSETFQALKSLLSADGKVTSVGDEGGFAPDFANNEEPLQYLIKAIEKAGYKAGEDISIAIDVASSELWNNEDKTYKLRWSTGEEFTTPEFVKYLEGLVAKYPIISIEDPIDENNWEDWASITKELGEKVQLVGDDFFVTNTDYLRKGIKMGAANSILVKVNQIGTLTESLEAIEMAKEAGYTAVVSHRSGETEDTTIADLVVATNAGQIKTGSMSRTDRLAKYNQLMRIEEQLGDTASYKGINSFYNIKK.

Q163 serves as a coordination point for (2R)-2-phosphoglycerate. E205 functions as the Proton donor in the catalytic mechanism. Mg(2+) is bound by residues D242, E288, and D315. Residues K340, R369, S370, and K391 each coordinate (2R)-2-phosphoglycerate. K340 functions as the Proton acceptor in the catalytic mechanism.

This sequence belongs to the enolase family. Mg(2+) serves as cofactor.

It is found in the cytoplasm. It localises to the secreted. The protein localises to the cell surface. The catalysed reaction is (2R)-2-phosphoglycerate = phosphoenolpyruvate + H2O. Its pathway is carbohydrate degradation; glycolysis; pyruvate from D-glyceraldehyde 3-phosphate: step 4/5. In terms of biological role, catalyzes the reversible conversion of 2-phosphoglycerate (2-PG) into phosphoenolpyruvate (PEP). It is essential for the degradation of carbohydrates via glycolysis. This chain is Enolase, found in Latilactobacillus sakei subsp. sakei (strain 23K) (Lactobacillus sakei subsp. sakei).